The chain runs to 213 residues: MQLKNPILGLCQQATFMLSAAKVDQCPDDEGFEVAFAGRSNAGKSSALNTLTHASLARTSKTPGRTQLLNFFKLDDDRRLVDLPGYGYAKVPIPLKQHWQRHLEAYLGSRESLKGLILMMDIRHPMTDFDLLMLDWAVASGMPMHILLTKADKLTYGAAKNTLLKVQSQIRKGWGEAVTIQLFSAPKRMGLEEAYTVLAGWMELADKGAEAEA.

One can recognise an EngB-type G domain in the interval 30–204; the sequence is EGFEVAFAGR…YTVLAGWMEL (175 aa). Residues 38-45, 64-68, 82-85, 149-152, and 182-185 each bind GTP; these read GRSNAGKS, GRTQL, DLPG, TKAD, and LFSA. Positions 45 and 66 each coordinate Mg(2+).

This sequence belongs to the TRAFAC class TrmE-Era-EngA-EngB-Septin-like GTPase superfamily. EngB GTPase family. The cofactor is Mg(2+).

In terms of biological role, necessary for normal cell division and for the maintenance of normal septation. The sequence is that of Probable GTP-binding protein EngB from Pseudomonas fluorescens (strain ATCC BAA-477 / NRRL B-23932 / Pf-5).